We begin with the raw amino-acid sequence, 373 residues long: 3-dehydroquinate synthase (373 aa).

NAD(+)-binding positions include 120 to 124 (GVVGD), 144 to 145 (TT), K157, K166, and 184 to 187 (FLKT). Zn(2+) is bound by residues E199, H262, and H278.

The protein belongs to the sugar phosphate cyclases superfamily. Dehydroquinate synthase family. NAD(+) is required as a cofactor. The cofactor is Co(2+). Zn(2+) serves as cofactor.

The protein localises to the cytoplasm. It catalyses the reaction 7-phospho-2-dehydro-3-deoxy-D-arabino-heptonate = 3-dehydroquinate + phosphate. The protein operates within metabolic intermediate biosynthesis; chorismate biosynthesis; chorismate from D-erythrose 4-phosphate and phosphoenolpyruvate: step 2/7. Functionally, catalyzes the conversion of 3-deoxy-D-arabino-heptulosonate 7-phosphate (DAHP) to dehydroquinate (DHQ). This is 3-dehydroquinate synthase from Clostridium tetani (strain Massachusetts / E88).